Here is a 274-residue protein sequence, read N- to C-terminus: Large ribosomal subunit protein uL2c (274 aa).

Disordered stretches follow at residues 1–22 (MAIH…DSQV) and 225–254 (PVDH…PALG).

Belongs to the universal ribosomal protein uL2 family. As to quaternary structure, part of the 50S ribosomal subunit.

The protein resides in the plastid. Its subcellular location is the chloroplast. The polypeptide is Large ribosomal subunit protein uL2c (rpl2) (Sinapis alba (White mustard)).